A 253-amino-acid chain; its full sequence is uncharacterized protein (253 aa).

An N-acetylalanine modification is found at Ala-2.

The protein belongs to the NAD(P)-dependent epimerase/dehydratase family. In terms of assembly, homodimer.

This is an uncharacterized protein from Arabidopsis thaliana (Mouse-ear cress).